Reading from the N-terminus, the 577-residue chain is MMTINNNNLNNSNNINNNNNIYTSNNNNNNNNYLIQTVPTMSETFDHMIETPQNDYISIHNHNQHNNHSPHQFYNNQYQHYQYTNDLIKLQPFCEINGQNDFQNSYQDPYQHQLSPPDMVGPYVNSYSNNSNNTNLIQNNNNQQLPSIITSPTIPLPPSPPSPTIINNSNNTISTIQFVNNKKRQHSDTTSSSSIYFIQQPHSTSTPFSLQCPNSPNSTSSSPLNSINYSYHPTFRVVTSSSSSASSSSTSSQPPSPQTLLSSSSISISNSSSFYNNTEASDEEMEEQFKEYLSPTISNLIESSHRENILNLVNDYLYEELPLKSLLMELREIQYQLGNGQNQSLLNNLIELFLILDNSSNVMINFLKENGVEDSEITIDQKRLSIILNDFENGLRGKDKTIKKSTSRGLRNPPNKWTKEESSKLITLVHENGDKQWKKIALQIGGGKTGAQCAQHWKRVLCPAIRKGSWDEEEEAKLFLLVEKHGQSWKNVASEIRTRTDIQCRYQYFKSCMSREVPWTPKEDEILQKKVIENKQDSTKEIGWMDLSKAMARARQTKIPRTALECKIRFYFLNAQL.

3 disordered regions span residues 1–23, 206–225, and 240–264; these read MMTINNNNLNNSNNINNNNNIYT, TPFSLQCPNSPNSTSSSPLN, and SSSSSASSSSTSSQPPSPQTLLSSS. A compositionally biased stretch (low complexity) spans 213–225; the sequence is PNSPNSTSSSPLN. 2 consecutive HTH myb-type domains span residues 403 to 465 and 466 to 517; these read KKST…CPAI and RKGS…SREV. 2 DNA-binding regions (H-T-H motif) span residues 437 to 461 and 489 to 513; these read WKKIALQIGGGKTGAQCAQHWKRVL and WKNVASEIRTRTDIQCRYQYFKSCM. Positions 518 to 570 constitute a Myb-like domain; sequence PWTPKEDEILQKKVIENKQDSTKEIGWMDLSKAMARARQTKIPRTALECKIRF.

The protein resides in the nucleus. The protein is Myb-like protein N (mybN) of Dictyostelium discoideum (Social amoeba).